We begin with the raw amino-acid sequence, 391 residues long: Sulfate adenylyltransferase (391 aa).

This sequence belongs to the sulfate adenylyltransferase family.

The catalysed reaction is sulfate + ATP + H(+) = adenosine 5'-phosphosulfate + diphosphate. It participates in sulfur metabolism; hydrogen sulfide biosynthesis; sulfite from sulfate: step 1/3. The chain is Sulfate adenylyltransferase from Lactiplantibacillus plantarum (strain ATCC BAA-793 / NCIMB 8826 / WCFS1) (Lactobacillus plantarum).